The chain runs to 34 residues: MVSSITQAEIFIALVVAAHAGVLAVRLCVSLYRA.

The helical transmembrane segment at 10-32 threads the bilayer; sequence IFIALVVAAHAGVLAVRLCVSLY.

It belongs to the PsaM family.

It localises to the cellular thylakoid membrane. This Synechococcus sp. (strain WH7803) protein is Photosystem I reaction center subunit XII.